The chain runs to 39 residues: Photosystem II reaction center protein J (39 aa).

The helical transmembrane segment at 7–27 threads the bilayer; the sequence is IPLWLVATIGGIAVLTVLGLF.

The protein belongs to the PsbJ family. PSII is composed of 1 copy each of membrane proteins PsbA, PsbB, PsbC, PsbD, PsbE, PsbF, PsbH, PsbI, PsbJ, PsbK, PsbL, PsbM, PsbT, PsbX, PsbY, PsbZ, Psb30/Ycf12, at least 3 peripheral proteins of the oxygen-evolving complex and a large number of cofactors. It forms dimeric complexes.

It localises to the plastid. Its subcellular location is the chloroplast thylakoid membrane. Functionally, one of the components of the core complex of photosystem II (PSII). PSII is a light-driven water:plastoquinone oxidoreductase that uses light energy to abstract electrons from H(2)O, generating O(2) and a proton gradient subsequently used for ATP formation. It consists of a core antenna complex that captures photons, and an electron transfer chain that converts photonic excitation into a charge separation. The chain is Photosystem II reaction center protein J from Cyanidioschyzon merolae (strain NIES-3377 / 10D) (Unicellular red alga).